A 249-amino-acid polypeptide reads, in one-letter code: Elsinochromes biosynthesis cluster protein HP3 (249 aa).

Asn106 carries an N-linked (GlcNAc...) asparagine glycan. Residues Val138–Ala158 traverse the membrane as a helical segment.

It localises to the membrane. Part of the gene cluster that mediates the biosynthesis of elsinochromes, pigments consisting of at least four interconvertible tautomers (A, B, C and D) that have a core phenolic quinone to which various side chains are attached and which play an important role in fungal pathogenesis. The non-reducing polyketide synthase PKS1 was proposed to iteratively catalyze decarboxylation between acetyl-CoA and malonyl-CoA subunits for polyketide chain elongation. The released polyketide undergoes cyclization to form an aromatic ring, and proceeds via serial modification steps to produce the heptaketide back- bone of elsinochrome. As elsinochrome has a symmetrical structure, two identical heptaketides are fused to form a core 1,2-dihydrobenzo-perylene ring structure, which can then be successively modified to produce the various derivatives of elsinochrome. Some of these reactions may be cooperatively carried out, at least in part, by the products of RDT1, OXR1 and PKS1. PRF1, embedded within the elsinochrome cluster possibly functions to stabilize some of the biosynthetic enzymes required for elsinochrome production. As prefoldin is a hexamer containing 2 a and 4 b subunits, additional prefoldin subunits, whose coding genes may not immediately link to the elsinochrome biosynthetic gene cluster, are required to fulfill the chaperone function. In addition, no methyltransferase-coding gene exists within the biosynthetic gene cluster, even though elsinochrome has four methyl groups at positions C3, C7, C8 and C12. Apparently, the identified gene cluster does not contain the entire entourage of genes responsible for elsinochrome biosynthesis. Once elsinochrome is synthesized, it must be exported outside the fungal cells, which is probably accomplished by the ECT1 transporter, to avoid toxicity. This Elsinoe fawcettii (Citrus scab fungus) protein is Elsinochromes biosynthesis cluster protein HP3.